The following is a 611-amino-acid chain: Dihydroxy-acid dehydratase (611 aa).

Mg(2+) is bound at residue D81. C122 serves as a coordination point for [2Fe-2S] cluster. Mg(2+)-binding residues include D123 and K124. K124 carries the N6-carboxylysine modification. C195 contributes to the [2Fe-2S] cluster binding site. E491 provides a ligand contact to Mg(2+). S517 acts as the Proton acceptor in catalysis.

Belongs to the IlvD/Edd family. As to quaternary structure, homodimer. The cofactor is [2Fe-2S] cluster. Mg(2+) is required as a cofactor.

The catalysed reaction is (2R)-2,3-dihydroxy-3-methylbutanoate = 3-methyl-2-oxobutanoate + H2O. It catalyses the reaction (2R,3R)-2,3-dihydroxy-3-methylpentanoate = (S)-3-methyl-2-oxopentanoate + H2O. Its pathway is amino-acid biosynthesis; L-isoleucine biosynthesis; L-isoleucine from 2-oxobutanoate: step 3/4. It functions in the pathway amino-acid biosynthesis; L-valine biosynthesis; L-valine from pyruvate: step 3/4. In terms of biological role, functions in the biosynthesis of branched-chain amino acids. Catalyzes the dehydration of (2R,3R)-2,3-dihydroxy-3-methylpentanoate (2,3-dihydroxy-3-methylvalerate) into 2-oxo-3-methylpentanoate (2-oxo-3-methylvalerate) and of (2R)-2,3-dihydroxy-3-methylbutanoate (2,3-dihydroxyisovalerate) into 2-oxo-3-methylbutanoate (2-oxoisovalerate), the penultimate precursor to L-isoleucine and L-valine, respectively. In Brucella suis (strain ATCC 23445 / NCTC 10510), this protein is Dihydroxy-acid dehydratase.